We begin with the raw amino-acid sequence, 319 residues long: Protein-methionine-sulfoxide reductase catalytic subunit MsrP (319 aa).

The tat-type signal signal peptide spans 1-54 (MSSFKPSRFSTARLTGDAVTPKSIYLRRREFMIGLGAIAATGAASSAFADPLEA). Mo-molybdopterin contacts are provided by residues Asn-75, 78-79 (YE), Cys-133, Asn-218, Arg-223, and 234-236 (GIK).

The protein belongs to the MsrP family. As to quaternary structure, heterodimer of a catalytic subunit (MsrP) and a heme-binding subunit (MsrQ). Mo-molybdopterin serves as cofactor. Predicted to be exported by the Tat system. The position of the signal peptide cleavage has not been experimentally proven.

The protein localises to the periplasm. The catalysed reaction is L-methionyl-[protein] + a quinone + H2O = L-methionyl-(S)-S-oxide-[protein] + a quinol. It catalyses the reaction L-methionyl-[protein] + a quinone + H2O = L-methionyl-(R)-S-oxide-[protein] + a quinol. Part of the MsrPQ system that repairs oxidized periplasmic proteins containing methionine sulfoxide residues (Met-O), using respiratory chain electrons. Thus protects these proteins from oxidative-stress damage caused by reactive species of oxygen and chlorine generated by the host defense mechanisms. MsrPQ is essential for the maintenance of envelope integrity under bleach stress, rescuing a wide series of structurally unrelated periplasmic proteins from methionine oxidation. The catalytic subunit MsrP is non-stereospecific, being able to reduce both (R-) and (S-) diastereoisomers of methionine sulfoxide. In Brucella melitensis biotype 1 (strain ATCC 23456 / CCUG 17765 / NCTC 10094 / 16M), this protein is Protein-methionine-sulfoxide reductase catalytic subunit MsrP.